We begin with the raw amino-acid sequence, 426 residues long: MLIKGGHVVDPKTNTNGIMDILVEDGIITEIGKDIEISNGDIIYAEGKLVLPGLVDAHCHLRDPGFEYKEDIETGTMSAAMGGFTSIACMPNTDPVCDNKAVVKYIINKAKQDGYVNVYPIGAISKGQKGEELSEIGELKFAGAVAISDDGKPVKSSSLMKRALEYSSMFDIAVISHCEDLDLADGGVMNEGYWSTVMGLKGIPSAAEEIMVARDIILSEYTKVPIHIAHVSTELSVELIRNAKKRGVKVTCETCPHYFVLTDEACKDFNTLAKVNPPLRTRRDVEAVIEGLKDGTIDIIATDHAPHHADEKNVEFNLAANGMVGFETALPLAITYLVKPGHLTISQLVEKMCVNPSKLLGINKGTLETGRSADITIVDLNEEFVVDVNKFKSKSKNSPFHGFKLNGSVYYTLVNGNVVVREKVLL.

The Zn(2+) site is built by His58 and His60. Residues 60-62 and Asn92 each bind substrate; that span reads HLR. Zn(2+)-binding residues include Asp150, His177, and His230. Asn276 is a substrate binding site. Asp303 is a Zn(2+) binding site. Asp303 is an active-site residue. Residue His307 participates in substrate binding.

This sequence belongs to the metallo-dependent hydrolases superfamily. DHOase family. Class I DHOase subfamily. Zn(2+) serves as cofactor.

The catalysed reaction is (S)-dihydroorotate + H2O = N-carbamoyl-L-aspartate + H(+). The protein operates within pyrimidine metabolism; UMP biosynthesis via de novo pathway; (S)-dihydroorotate from bicarbonate: step 3/3. Catalyzes the reversible cyclization of carbamoyl aspartate to dihydroorotate. The protein is Dihydroorotase of Acetivibrio thermocellus (strain ATCC 27405 / DSM 1237 / JCM 9322 / NBRC 103400 / NCIMB 10682 / NRRL B-4536 / VPI 7372) (Clostridium thermocellum).